A 257-amino-acid polypeptide reads, in one-letter code: UPF0246 protein CLL_A2361 (257 aa).

The protein belongs to the UPF0246 family.

This is UPF0246 protein CLL_A2361 from Clostridium botulinum (strain Eklund 17B / Type B).